The chain runs to 276 residues: Undecaprenyl-diphosphatase 1 (276 aa).

A run of 7 helical transmembrane segments spans residues 4–24, 45–62, 83–103, 108–128, 187–207, 217–237, and 252–272; these read ILICKALILGVVEGLTEFLPV, KTFDVVIQFGAILAVCWE, FTLNVVIATIPAIALGLLFEK, VLFSPVPVAFALVVGGAIILW, VATEFSFFLAIPIIFGATLYE, VDSLGLFALGLVAAFVSAFVC, and VFAWYRIAFGLFVLLVGYSGW.

It belongs to the UppP family.

The protein resides in the cell inner membrane. It catalyses the reaction di-trans,octa-cis-undecaprenyl diphosphate + H2O = di-trans,octa-cis-undecaprenyl phosphate + phosphate + H(+). In terms of biological role, catalyzes the dephosphorylation of undecaprenyl diphosphate (UPP). Confers resistance to bacitracin. This Burkholderia ambifaria (strain ATCC BAA-244 / DSM 16087 / CCUG 44356 / LMG 19182 / AMMD) (Burkholderia cepacia (strain AMMD)) protein is Undecaprenyl-diphosphatase 1.